A 485-amino-acid chain; its full sequence is Glycogen synthase (485 aa).

Lys-15 lines the ADP-alpha-D-glucose pocket.

It belongs to the glycosyltransferase 1 family. Bacterial/plant glycogen synthase subfamily.

The enzyme catalyses [(1-&gt;4)-alpha-D-glucosyl](n) + ADP-alpha-D-glucose = [(1-&gt;4)-alpha-D-glucosyl](n+1) + ADP + H(+). It participates in glycan biosynthesis; glycogen biosynthesis. Its function is as follows. Synthesizes alpha-1,4-glucan chains using ADP-glucose. This is Glycogen synthase from Geobacillus thermodenitrificans (strain NG80-2).